The chain runs to 479 residues: M-phase inducer phosphatase (479 aa).

The segment at 182–218 (MTESNTNSTTTPPPKTPETARDCFKRPEPPASANCSP) is disordered. Over residues 199 to 209 (ETARDCFKRPE) the composition is skewed to basic and acidic residues. Residues 316–432 (KVASYRIIDC…FFESHVELCE (117 aa)) form the Rhodanese domain. C379 is a catalytic residue. Position 455 is a phosphoserine (S455).

The protein belongs to the MPI phosphatase family.

It catalyses the reaction O-phospho-L-tyrosyl-[protein] + H2O = L-tyrosyl-[protein] + phosphate. This protein functions as a dosage-dependent inducer in mitotic control. It is a tyrosine protein phosphatase required for progression of the cell cycle. It may directly dephosphorylate Cdk1 and activate the Cdk1 activity. The polypeptide is M-phase inducer phosphatase (stg) (Drosophila melanogaster (Fruit fly)).